Consider the following 117-residue polypeptide: Transcription elongation factor A protein-like 8 (117 aa).

The segment at 1-82 is disordered; that stretch reads MQKSCDENEG…EEVIRGVDEL (82 aa). A compositionally biased stretch (basic and acidic residues) spans 41–82; sequence NVREETEGSHRGEPAEPSPEPKEDTPARHLNPEEVIRGVDEL. Positions 73-100 form a coiled coil; sequence EEVIRGVDELERLREEIRRVRNKFVLMH.

Belongs to the TFS-II family. TFA subfamily.

The protein localises to the nucleus. May be involved in transcriptional regulation. The polypeptide is Transcription elongation factor A protein-like 8 (Tceal8) (Mus musculus (Mouse)).